A 92-amino-acid polypeptide reads, in one-letter code: Phenol 2-monooxygenase, auxiliary component DmpK (92 aa).

As to quaternary structure, homotrimer or homotetramer. Interacts with the phenol hydroxylase components DmpL (P1 component) and DmpN (P3 component).

It participates in aromatic compound metabolism; phenol degradation. Its function is as follows. DmpK is an auxiliary protein associated with the multicomponent phenol hydroxylase DmpLMNOP and it may be involved in the post-translational incorporation of iron into the oxygenase component of the phenol hydroxylase. Required for growth on phenol but not for in vitro phenol hydroxylase activity. The polypeptide is Phenol 2-monooxygenase, auxiliary component DmpK (Pseudomonas sp. (strain CF600)).